A 554-amino-acid polypeptide reads, in one-letter code: CTP synthase (554 aa).

An amidoligase domain region spans residues 1-265; that stretch reads MTPLIFVTGG…DELVIDQFKL (265 aa). Residue serine 13 participates in CTP binding. Position 13 (serine 13) interacts with UTP. ATP-binding positions include 14–19 and aspartate 71; that span reads SLGKGI. Mg(2+) contacts are provided by aspartate 71 and glutamate 139. Residues 146 to 148, 186 to 191, and lysine 222 contribute to the CTP site; these read DIE and KTKPTQ. Residues 186–191 and lysine 222 contribute to the UTP site; that span reads KTKPTQ. Residues 292–545 form the Glutamine amidotransferase type-1 domain; that stretch reads TIAVVGKYVD…VRAAREKKAG (254 aa). Residue glycine 353 coordinates L-glutamine. The active-site Nucleophile; for glutamine hydrolysis is the cysteine 380. Residues 381–384, glutamate 404, and arginine 471 each bind L-glutamine; that span reads YGMQ. Residues histidine 518 and glutamate 520 contribute to the active site.

This sequence belongs to the CTP synthase family. In terms of assembly, homotetramer.

The enzyme catalyses UTP + L-glutamine + ATP + H2O = CTP + L-glutamate + ADP + phosphate + 2 H(+). It carries out the reaction L-glutamine + H2O = L-glutamate + NH4(+). It catalyses the reaction UTP + NH4(+) + ATP = CTP + ADP + phosphate + 2 H(+). It participates in pyrimidine metabolism; CTP biosynthesis via de novo pathway; CTP from UDP: step 2/2. Its activity is regulated as follows. Allosterically activated by GTP, when glutamine is the substrate; GTP has no effect on the reaction when ammonia is the substrate. The allosteric effector GTP functions by stabilizing the protein conformation that binds the tetrahedral intermediate(s) formed during glutamine hydrolysis. Inhibited by the product CTP, via allosteric rather than competitive inhibition. Functionally, catalyzes the ATP-dependent amination of UTP to CTP with either L-glutamine or ammonia as the source of nitrogen. Regulates intracellular CTP levels through interactions with the four ribonucleotide triphosphates. The protein is CTP synthase of Xanthomonas campestris pv. campestris (strain 8004).